The primary structure comprises 432 residues: Cyclic 2,3-diphosphoglycerate synthetase (432 aa).

This sequence belongs to the cyclic 2,3-diphosphoglycerate synthetase family.

It is found in the cytoplasm. The enzyme catalyses (2R)-2,3-bisphosphoglycerate + ATP + H(+) = cyclic (2R)-2,3-bisphosphoglycerate + ADP + phosphate. Functionally, catalyzes the formation of cyclic 2,3-diphosphoglycerate (cDPG) by formation of an intramolecular phosphoanhydride bond at the expense of ATP. This chain is Cyclic 2,3-diphosphoglycerate synthetase, found in Thermococcus kodakarensis (strain ATCC BAA-918 / JCM 12380 / KOD1) (Pyrococcus kodakaraensis (strain KOD1)).